Reading from the N-terminus, the 150-residue chain is Histone H3-like centromeric protein A (150 aa).

The tract at residues 1-55 (MRPGSTPPSRRKSRPPRRVSPPLPTTSRTSPRRPHAQQQRRASRASPKKRFRPGT) is disordered. The span at 41–53 (RASRASPKKRFRP) shows a compositional bias: basic residues. The segment at 53–150 (PGTRALMEIR…RIRGVNEGLG (98 aa)) is H3-like.

This sequence belongs to the histone H3 family. Component of centromeric nucleosomes, where DNA is wrapped around a histone octamer core. The octamer contains two molecules each of H2A, H2B, CENPA and H4 assembled in one CENPA-H4 heterotetramer and two H2A-H2B heterodimers. CENPA modulates the DNA-binding characteristics of nucleosomes so that protruding DNA ends have higher flexibility than in nucleosomes containing conventional histone H3.

The protein localises to the nucleus. It localises to the chromosome. Its subcellular location is the centromere. Functionally, histone H3-like nucleosomal protein that is specifically found in centromeric nucleosomes. Replaces conventional H3 in the nucleosome core of centromeric chromatin that serves as an assembly site for the inner kinetochore. The presence of CENPA subtly modifies the nucleosome structure and the way DNA is wrapped around the nucleosome and gives rise to protruding DNA ends that are less well-ordered and rigid compared to nucleosomes containing histone H3. May serve as an epigenetic mark that propagates centromere identity through replication and cell division. Required for recruitment and assembly of kinetochore proteins, and as a consequence required for progress through mitosis, chromosome segregation and cytokinesis. The polypeptide is Histone H3-like centromeric protein A (cenpa) (Xenopus laevis (African clawed frog)).